The sequence spans 547 residues: ATP synthase subunit alpha (547 aa).

Residue 172 to 179 (GDRKTGKT) coordinates ATP.

This sequence belongs to the ATPase alpha/beta chains family. As to quaternary structure, F-type ATPases have 2 components, CF(1) - the catalytic core - and CF(0) - the membrane proton channel. CF(1) has five subunits: alpha(3), beta(3), gamma(1), delta(1), epsilon(1). CF(0) has three main subunits: a(1), b(2) and c(9-12). The alpha and beta chains form an alternating ring which encloses part of the gamma chain. CF(1) is attached to CF(0) by a central stalk formed by the gamma and epsilon chains, while a peripheral stalk is formed by the delta and b chains.

Its subcellular location is the cell membrane. The catalysed reaction is ATP + H2O + 4 H(+)(in) = ADP + phosphate + 5 H(+)(out). In terms of biological role, produces ATP from ADP in the presence of a proton gradient across the membrane. The alpha chain is a regulatory subunit. The chain is ATP synthase subunit alpha from Rhodococcus opacus (strain B4).